We begin with the raw amino-acid sequence, 174 residues long: Nucleoside-triphosphatase THEP1 (174 aa).

ATP is bound by residues 7-14 (GRPGVGKT) and 94-101 (LIIVDEIG).

This sequence belongs to the THEP1 NTPase family.

The enzyme catalyses a ribonucleoside 5'-triphosphate + H2O = a ribonucleoside 5'-diphosphate + phosphate + H(+). Functionally, has nucleotide phosphatase activity towards ATP, GTP, CTP, TTP and UTP. May hydrolyze nucleoside diphosphates with lower efficiency. The sequence is that of Nucleoside-triphosphatase THEP1 from Thermotoga maritima (strain ATCC 43589 / DSM 3109 / JCM 10099 / NBRC 100826 / MSB8).